The chain runs to 316 residues: Lipoyl synthase (316 aa).

[4Fe-4S] cluster-binding residues include Cys66, Cys71, Cys77, Cys92, Cys96, Cys99, and Ser306. The 218-residue stretch at 78-295 (YSQQTATFMV…ADIAKSMGFK (218 aa)) folds into the Radical SAM core domain.

The protein belongs to the radical SAM superfamily. Lipoyl synthase family. Requires [4Fe-4S] cluster as cofactor.

Its subcellular location is the cytoplasm. It catalyses the reaction [[Fe-S] cluster scaffold protein carrying a second [4Fe-4S](2+) cluster] + N(6)-octanoyl-L-lysyl-[protein] + 2 oxidized [2Fe-2S]-[ferredoxin] + 2 S-adenosyl-L-methionine + 4 H(+) = [[Fe-S] cluster scaffold protein] + N(6)-[(R)-dihydrolipoyl]-L-lysyl-[protein] + 4 Fe(3+) + 2 hydrogen sulfide + 2 5'-deoxyadenosine + 2 L-methionine + 2 reduced [2Fe-2S]-[ferredoxin]. It functions in the pathway protein modification; protein lipoylation via endogenous pathway; protein N(6)-(lipoyl)lysine from octanoyl-[acyl-carrier-protein]: step 2/2. Functionally, catalyzes the radical-mediated insertion of two sulfur atoms into the C-6 and C-8 positions of the octanoyl moiety bound to the lipoyl domains of lipoate-dependent enzymes, thereby converting the octanoylated domains into lipoylated derivatives. The polypeptide is Lipoyl synthase (Rhodopirellula baltica (strain DSM 10527 / NCIMB 13988 / SH1)).